A 221-amino-acid chain; its full sequence is UPF0758 protein HI_0952 (221 aa).

The 123-residue stretch at 99–221 (IINDPETVKL…CYSFAENCLL (123 aa)) folds into the MPN domain. Zn(2+)-binding residues include histidine 170, histidine 172, and aspartate 183. A JAMM motif motif is present at residues 170 to 183 (HNHPSGITEPSYSD).

It belongs to the UPF0758 family.

The polypeptide is UPF0758 protein HI_0952 (Haemophilus influenzae (strain ATCC 51907 / DSM 11121 / KW20 / Rd)).